Reading from the N-terminus, the 225-residue chain is Non-structural protein V (225 aa).

A compositionally biased stretch (polar residues) spans 145-157; it reads SGPSLTDQASSKD. Residues 145–172 form a disordered region; the sequence is SGPSLTDQASSKDPNFKRGGEIDGRHKG. Positions 158–169 are enriched in basic and acidic residues; that stretch reads PNFKRGGEIDGR. 8 residues coordinate Zn(2+): His174, Cys193, Cys197, Cys209, Cys211, Cys214, Cys218, and Cys221.

The protein belongs to the paramyxoviruses V protein family.

It localises to the host cytoplasm. Its function is as follows. Plays an essential role in the inhibition of host immune response. Prevents the establishment of cellular antiviral state by blocking interferon-alpha/beta (IFN-alpha/beta) production and signaling pathway. Interacts with host IFIH1/MDA5 and DHX58/LGP2 to inhibit the transduction pathway involved in the activation of IFN-beta promoter, thus protecting the virus against cell antiviral state. Efficiently blocks type I and type II IFN signaling following infection, probably by targeting host STAT1 for proteasomal degradation. The polypeptide is Non-structural protein V (P/V) (Simian virus 41 (SV41)).